The following is a 387-amino-acid chain: Protein salvador homolog 1 (387 aa).

Phosphoserine occurs at positions 95 and 138. WW domains lie at L201 to E234 and E236 to A269. Position 212 is a phosphothreonine (T212). The SARAH domain maps to I323–R370.

Homodimer. Stabilized through interaction with STK3/MST2 or STK4/MST1. Interacts (via SARAH domain) with isoform 1 of NEK2. Interacts with ESR1 only in the presence of STK3/MST2. Interacts with WTIP and AJUBA. Phosphorylated by STK3/MST2 and STK4/MST1. Phosphorylation is not required for SAV1 stability and may increase the number of protein binding sites on the scaffold molecule.

The protein localises to the nucleus. Its subcellular location is the cytoplasm. Functionally, regulator of STK3/MST2 and STK4/MST1 in the Hippo signaling pathway which plays a pivotal role in organ size control and tumor suppression by restricting proliferation and promoting apoptosis. The core of this pathway is composed of a kinase cascade wherein STK3/MST2 and STK4/MST1, in complex with its regulatory protein SAV1, phosphorylates and activates LATS1/2 in complex with its regulatory protein MOB1, which in turn phosphorylates and inactivates YAP1 oncoprotein and WWTR1/TAZ. Phosphorylation of YAP1 by LATS1/2 inhibits its translocation into the nucleus to regulate cellular genes important for cell proliferation, cell death, and cell migration. SAV1 is required for STK3/MST2 and STK4/MST1 activation and promotes cell-cycle exit and terminal differentiation in developing epithelial tissues. Plays a role in centrosome disjunction by regulating the localization of NEK2 to centrosomes, and its ability to phosphorylate CROCC and CEP250. In conjunction with STK3/MST2, activates the transcriptional activity of ESR1 through the modulation of its phosphorylation. This chain is Protein salvador homolog 1, found in Rattus norvegicus (Rat).